Consider the following 83-residue polypeptide: Small ribosomal subunit protein uS17 (83 aa).

Belongs to the universal ribosomal protein uS17 family. As to quaternary structure, part of the 30S ribosomal subunit.

Its function is as follows. One of the primary rRNA binding proteins, it binds specifically to the 5'-end of 16S ribosomal RNA. This chain is Small ribosomal subunit protein uS17, found in Campylobacter hominis (strain ATCC BAA-381 / DSM 21671 / CCUG 45161 / LMG 19568 / NCTC 13146 / CH001A).